A 284-amino-acid chain; its full sequence is Pantothenate synthetase (284 aa).

Residue 30–37 coordinates ATP; the sequence is MGALHDGH. The Proton donor role is filled by H37. (R)-pantoate is bound at residue Q61. Q61 is a beta-alanine binding site. 147-150 is an ATP binding site; sequence GEKD. Residue Q153 participates in (R)-pantoate binding. ATP is bound by residues V176 and 184–187; that span reads KSSR.

Belongs to the pantothenate synthetase family. In terms of assembly, homodimer.

The protein resides in the cytoplasm. It carries out the reaction (R)-pantoate + beta-alanine + ATP = (R)-pantothenate + AMP + diphosphate + H(+). It functions in the pathway cofactor biosynthesis; (R)-pantothenate biosynthesis; (R)-pantothenate from (R)-pantoate and beta-alanine: step 1/1. Catalyzes the condensation of pantoate with beta-alanine in an ATP-dependent reaction via a pantoyl-adenylate intermediate. The protein is Pantothenate synthetase of Chloroherpeton thalassium (strain ATCC 35110 / GB-78).